The sequence spans 753 residues: 5-methyltetrahydropteroyltriglutamate--homocysteine methyltransferase (753 aa).

5-methyltetrahydropteroyltri-L-glutamate-binding positions include 19–22 (RELK) and Arg-113. Residues 430 to 432 (IGS) and Glu-483 each bind L-homocysteine. L-methionine contacts are provided by residues 430 to 432 (IGS) and Glu-483. 5-methyltetrahydropteroyltri-L-glutamate is bound by residues 514–515 (RC) and Trp-560. An L-homocysteine-binding site is contributed by Asp-598. Asp-598 contributes to the L-methionine binding site. Residue Glu-604 coordinates 5-methyltetrahydropteroyltri-L-glutamate. The Zn(2+) site is built by His-640, Cys-642, and Glu-664. His-693 (proton donor) is an active-site residue. Cys-725 contributes to the Zn(2+) binding site.

This sequence belongs to the vitamin-B12 independent methionine synthase family. Zn(2+) serves as cofactor.

The enzyme catalyses 5-methyltetrahydropteroyltri-L-glutamate + L-homocysteine = tetrahydropteroyltri-L-glutamate + L-methionine. It functions in the pathway amino-acid biosynthesis; L-methionine biosynthesis via de novo pathway; L-methionine from L-homocysteine (MetE route): step 1/1. Catalyzes the transfer of a methyl group from 5-methyltetrahydrofolate to homocysteine resulting in methionine formation. The polypeptide is 5-methyltetrahydropteroyltriglutamate--homocysteine methyltransferase (Rhodococcus jostii (strain RHA1)).